The sequence spans 70 residues: Cytochrome c oxidase subunit 8B, mitochondrial (70 aa).

The N-terminal 24 residues, 1-24 (MLRLAPTVRLLQAPLRGWAVPKAH), are a transit peptide targeting the mitochondrion. Over 25–35 (ITAKPAKTPTS) the chain is Mitochondrial matrix. Residues 36-59 (PKEQAIGLSVTFLSFLLPAGWVLY) form a helical membrane-spanning segment. Topologically, residues 60–70 (HLDNYKKSSAA) are mitochondrial intermembrane.

This sequence belongs to the cytochrome c oxidase VIII family. As to quaternary structure, component of the cytochrome c oxidase (complex IV, CIV), a multisubunit enzyme composed of 14 subunits. The complex is composed of a catalytic core of 3 subunits MT-CO1, MT-CO2 and MT-CO3, encoded in the mitochondrial DNA, and 11 supernumerary subunits COX4I1 (or COX4I2), COX5A, COX5B, COX6A2 (or COX6A1), COX6B1 (or COX6B2), COX6C, COX7A1 (or COX7A2), COX7B, COX7C, COX8B and NDUFA4, which are encoded in the nuclear genome. The complex exists as a monomer or a dimer and forms supercomplexes (SCs) in the inner mitochondrial membrane with NADH-ubiquinone oxidoreductase (complex I, CI) and ubiquinol-cytochrome c oxidoreductase (cytochrome b-c1 complex, complex III, CIII), resulting in different assemblies (supercomplex SCI(1)III(2)IV(1) and megacomplex MCI(2)III(2)IV(2)).

The protein resides in the mitochondrion inner membrane. Its pathway is energy metabolism; oxidative phosphorylation. Functionally, component of the cytochrome c oxidase, the last enzyme in the mitochondrial electron transport chain which drives oxidative phosphorylation. The respiratory chain contains 3 multisubunit complexes succinate dehydrogenase (complex II, CII), ubiquinol-cytochrome c oxidoreductase (cytochrome b-c1 complex, complex III, CIII) and cytochrome c oxidase (complex IV, CIV), that cooperate to transfer electrons derived from NADH and succinate to molecular oxygen, creating an electrochemical gradient over the inner membrane that drives transmembrane transport and the ATP synthase. Cytochrome c oxidase is the component of the respiratory chain that catalyzes the reduction of oxygen to water. Electrons originating from reduced cytochrome c in the intermembrane space (IMS) are transferred via the dinuclear copper A center (CU(A)) of subunit 2 and heme A of subunit 1 to the active site in subunit 1, a binuclear center (BNC) formed by heme A3 and copper B (CU(B)). The BNC reduces molecular oxygen to 2 water molecules using 4 electrons from cytochrome c in the IMS and 4 protons from the mitochondrial matrix. This is Cytochrome c oxidase subunit 8B, mitochondrial (COX8B) from Bos taurus (Bovine).